The primary structure comprises 333 residues: PRKC apoptosis WT1 regulator protein (333 aa).

Composition is skewed to low complexity over residues 1 to 14 (MATGGYRSGGSTTT), 33 to 51 (PAGPGSSGGDPAAKSPAGS), 66 to 80 (GPAGAAAPAAPAPGA), and 105 to 116 (PSAAAASGAPGS). A disordered region spans residues 1-262 (MATGGYRSGG…ASFSSSSTLE (262 aa)). The B30.2/SPRY domain-binding motif signature appears at 62 to 66 (ELNHG). A Nuclear localization signal motif is present at residues 138-154 (RKGKGQIEKRKLREKRR). The interval 138 to 196 (RKGKGQIEKRKLREKRRSTGVVNIPAAECLDEYEDDEAGQKERKREDAITQQNTIQNEA) is selective for apoptosis induction in cancer cells (SAC). The residue at position 156 (threonine 156) is a Phosphothreonine; by PKA. Residues 175 to 185 (AGQKERKREDA) show a composition bias toward basic and acidic residues. Residues 186 to 196 (ITQQNTIQNEA) show a composition bias toward polar residues. A Phosphoserine modification is found at serine 224. The span at 235-248 (PRTDRSGFSRHNRD) shows a compositional bias: basic and acidic residues. Residues 255 to 333 (FSSSSTLEKR…LLKVVGQLTR (79 aa)) are a coiled coil. The leucine-zipper stretch occupies residues 293 to 333 (IGKLKEEIDLLNRDLDDMEDENEQLKQENKTLLKVVGQLTR).

In terms of assembly, homooligomer. Interacts (via the C-terminal region) with WT1. Interacts with THAP1. Interacts with AATF. Interacts with BACE1. Interacts with SPSB1 (via B30.2/SPRY domain); this interaction is direct and occurs in association with the Elongin BC complex. Interacts with SPSB2 (via B30.2/SPRY domain); this interaction occurs in association with the Elongin BC complex. Interacts with SPSB4 (via B30.2/SPRY domain); this interaction occurs in association with the Elongin BC complex. Component of a ternary complex composed of SQSTM1 and PRKCZ. Interacts with actin. In terms of processing, preferentially phosphorylated at the Thr-156 by PKC in cancer cells.

Its subcellular location is the cytoplasm. The protein localises to the nucleus. In terms of biological role, pro-apoptotic protein capable of selectively inducing apoptosis in cancer cells, sensitizing the cells to diverse apoptotic stimuli and causing regression of tumors in animal models. Induces apoptosis in certain cancer cells by activation of the Fas prodeath pathway and coparallel inhibition of NF-kappa-B transcriptional activity. Inhibits the transcriptional activation and augments the transcriptional repression mediated by WT1. Down-regulates the anti-apoptotic protein BCL2 via its interaction with WT1. Also seems to be a transcriptional repressor by itself. May be directly involved in regulating the amyloid precursor protein (APP) cleavage activity of BACE1. In Mus musculus (Mouse), this protein is PRKC apoptosis WT1 regulator protein (Pawr).